Reading from the N-terminus, the 366-residue chain is Flagellar P-ring protein (366 aa).

Positions 1–20 are cleaved as a signal peptide; that stretch reads MVIKFLSALILLLVTTAAQA.

This sequence belongs to the FlgI family. As to quaternary structure, the basal body constitutes a major portion of the flagellar organelle and consists of four rings (L,P,S, and M) mounted on a central rod.

It is found in the periplasm. It localises to the bacterial flagellum basal body. In terms of biological role, assembles around the rod to form the L-ring and probably protects the motor/basal body from shearing forces during rotation. This is Flagellar P-ring protein from Escherichia coli (strain UTI89 / UPEC).